The primary structure comprises 621 residues: 1,4-alpha-glucan branching enzyme GlgB (621 aa).

Residue Asp-302 is the Nucleophile of the active site. The Proton donor role is filled by Glu-355.

It belongs to the glycosyl hydrolase 13 family. GlgB subfamily. As to quaternary structure, monomer.

The enzyme catalyses Transfers a segment of a (1-&gt;4)-alpha-D-glucan chain to a primary hydroxy group in a similar glucan chain.. Its pathway is glycan biosynthesis; glycogen biosynthesis. Its function is as follows. Catalyzes the formation of the alpha-1,6-glucosidic linkages in glycogen by scission of a 1,4-alpha-linked oligosaccharide from growing alpha-1,4-glucan chains and the subsequent attachment of the oligosaccharide to the alpha-1,6 position. The chain is 1,4-alpha-glucan branching enzyme GlgB from Dechloromonas aromatica (strain RCB).